The sequence spans 344 residues: L-rhamnose-proton symporter (344 aa).

The next 10 helical transmembrane spans lie at 4–24 (AITM…CFYA), 38–58 (WSVG…ALLL), 68–88 (FSLS…IGNI), 101–121 (MGIG…TPII), 137–157 (TLLG…AGQL), 175–195 (LVLA…MNAA), 214–234 (LPSY…FCFI), 259–279 (VLLS…YAWG), 290–310 (ISWM…GLVL), and 323–343 (VLSL…MGMA).

It belongs to the L-rhamnose transporter (TC 2.A.7.6) family.

It is found in the cell inner membrane. It carries out the reaction L-rhamnopyranose(in) + H(+)(in) = L-rhamnopyranose(out) + H(+)(out). In terms of biological role, uptake of L-rhamnose across the cytoplasmic membrane with the concomitant transport of protons into the cell (symport system). In Escherichia coli O17:K52:H18 (strain UMN026 / ExPEC), this protein is L-rhamnose-proton symporter.